The sequence spans 227 residues: Cytochrome c oxidase subunit 2 (227 aa).

Topologically, residues 1–26 are mitochondrial intermembrane; it reads MATWSNLNLQNSSSPLMEQLIFFHDH. A helical transmembrane segment spans residues 27–48; the sequence is TLMILLMITVLVAYIMSMLFFN. At 49–62 the chain is on the mitochondrial matrix side; the sequence is LYTNRFLLEGQTIE. The helical transmembrane segment at 63–82 threads the bilayer; that stretch reads IIWTILPAITLIFIALPSLR. Topologically, residues 83-227 are mitochondrial intermembrane; it reads LLYLLDESMD…FINWIKNYSS (145 aa). Residues His-160, Cys-195, Glu-197, Cys-199, His-203, and Met-206 each contribute to the Cu cation site. Glu-197 is a binding site for Mg(2+).

The protein belongs to the cytochrome c oxidase subunit 2 family. Component of the cytochrome c oxidase (complex IV, CIV), a multisubunit enzyme composed of a catalytic core of 3 subunits and several supernumerary subunits. The complex exists as a monomer or a dimer and forms supercomplexes (SCs) in the inner mitochondrial membrane with ubiquinol-cytochrome c oxidoreductase (cytochrome b-c1 complex, complex III, CIII). Cu cation serves as cofactor.

The protein localises to the mitochondrion inner membrane. It carries out the reaction 4 Fe(II)-[cytochrome c] + O2 + 8 H(+)(in) = 4 Fe(III)-[cytochrome c] + 2 H2O + 4 H(+)(out). Its function is as follows. Component of the cytochrome c oxidase, the last enzyme in the mitochondrial electron transport chain which drives oxidative phosphorylation. The respiratory chain contains 3 multisubunit complexes succinate dehydrogenase (complex II, CII), ubiquinol-cytochrome c oxidoreductase (cytochrome b-c1 complex, complex III, CIII) and cytochrome c oxidase (complex IV, CIV), that cooperate to transfer electrons derived from NADH and succinate to molecular oxygen, creating an electrochemical gradient over the inner membrane that drives transmembrane transport and the ATP synthase. Cytochrome c oxidase is the component of the respiratory chain that catalyzes the reduction of oxygen to water. Electrons originating from reduced cytochrome c in the intermembrane space (IMS) are transferred via the dinuclear copper A center (CU(A)) of subunit 2 and heme A of subunit 1 to the active site in subunit 1, a binuclear center (BNC) formed by heme A3 and copper B (CU(B)). The BNC reduces molecular oxygen to 2 water molecules using 4 electrons from cytochrome c in the IMS and 4 protons from the mitochondrial matrix. This chain is Cytochrome c oxidase subunit 2 (COII), found in Acheta domesticus (House cricket).